A 931-amino-acid polypeptide reads, in one-letter code: Protein translocase subunit SecA (931 aa).

ATP is bound by residues Gln-87, 105 to 109 (GEGKT), and Asp-515. Residues Cys-915, Cys-917, Cys-926, and His-927 each coordinate Zn(2+).

This sequence belongs to the SecA family. As to quaternary structure, monomer and homodimer. Part of the essential Sec protein translocation apparatus which comprises SecA, SecYEG and auxiliary proteins SecDF-YajC and YidC. Zn(2+) serves as cofactor.

It localises to the cell inner membrane. The protein localises to the cytoplasm. It catalyses the reaction ATP + H2O + cellular proteinSide 1 = ADP + phosphate + cellular proteinSide 2.. Part of the Sec protein translocase complex. Interacts with the SecYEG preprotein conducting channel. Has a central role in coupling the hydrolysis of ATP to the transfer of proteins into and across the cell membrane, serving both as a receptor for the preprotein-SecB complex and as an ATP-driven molecular motor driving the stepwise translocation of polypeptide chains across the membrane. The sequence is that of Protein translocase subunit SecA from Burkholderia pseudomallei (strain K96243).